A 225-amino-acid chain; its full sequence is MAGVRFGVVVFPGSNCDRDVAWVTRGLLGCPTRLIWHRETDLSELDVVVLPGGFSYGDYLRCGAIARFAPVMGSLKEHAARGGYVLGICNGFQILTEAGLLPGALVRNANLHFICDRVGIRVERQDLPWTSAYPQGSTLTLPIAHGEGRYTCDPDTLKQLQDRGQIVFRYAPVAPNGSVDNIAGICDPSGRILGLMPHPERAADPDLPGQDGIPFWQSILRSFAA.

The 220-residue stretch at Phe6 to Ala225 folds into the Glutamine amidotransferase type-1 domain. Cys89 serves as the catalytic Nucleophile. Active-site residues include His198 and Glu200.

Part of the FGAM synthase complex composed of 1 PurL, 1 PurQ and 2 PurS subunits.

The protein resides in the cytoplasm. It carries out the reaction N(2)-formyl-N(1)-(5-phospho-beta-D-ribosyl)glycinamide + L-glutamine + ATP + H2O = 2-formamido-N(1)-(5-O-phospho-beta-D-ribosyl)acetamidine + L-glutamate + ADP + phosphate + H(+). It catalyses the reaction L-glutamine + H2O = L-glutamate + NH4(+). Its pathway is purine metabolism; IMP biosynthesis via de novo pathway; 5-amino-1-(5-phospho-D-ribosyl)imidazole from N(2)-formyl-N(1)-(5-phospho-D-ribosyl)glycinamide: step 1/2. Its function is as follows. Part of the phosphoribosylformylglycinamidine synthase complex involved in the purines biosynthetic pathway. Catalyzes the ATP-dependent conversion of formylglycinamide ribonucleotide (FGAR) and glutamine to yield formylglycinamidine ribonucleotide (FGAM) and glutamate. The FGAM synthase complex is composed of three subunits. PurQ produces an ammonia molecule by converting glutamine to glutamate. PurL transfers the ammonia molecule to FGAR to form FGAM in an ATP-dependent manner. PurS interacts with PurQ and PurL and is thought to assist in the transfer of the ammonia molecule from PurQ to PurL. This chain is Phosphoribosylformylglycinamidine synthase subunit PurQ, found in Synechococcus sp. (strain JA-2-3B'a(2-13)) (Cyanobacteria bacterium Yellowstone B-Prime).